A 179-amino-acid chain; its full sequence is 6,7-dimethyl-8-ribityllumazine synthase (179 aa).

5-amino-6-(D-ribitylamino)uracil contacts are provided by residues Trp-13, 45 to 47 (AVE), and 68 to 70 (VVI). 73–74 (DT) lines the (2S)-2-hydroxy-3-oxobutyl phosphate pocket. The active-site Proton donor is the His-76. Phe-101 is a binding site for 5-amino-6-(D-ribitylamino)uracil. (2S)-2-hydroxy-3-oxobutyl phosphate is bound at residue Arg-115. Positions 157–179 (AKAAKKPAKAAAKTQKKKKKVRK) are disordered.

Belongs to the DMRL synthase family.

It catalyses the reaction (2S)-2-hydroxy-3-oxobutyl phosphate + 5-amino-6-(D-ribitylamino)uracil = 6,7-dimethyl-8-(1-D-ribityl)lumazine + phosphate + 2 H2O + H(+). It participates in cofactor biosynthesis; riboflavin biosynthesis; riboflavin from 2-hydroxy-3-oxobutyl phosphate and 5-amino-6-(D-ribitylamino)uracil: step 1/2. Its function is as follows. Catalyzes the formation of 6,7-dimethyl-8-ribityllumazine by condensation of 5-amino-6-(D-ribitylamino)uracil with 3,4-dihydroxy-2-butanone 4-phosphate. This is the penultimate step in the biosynthesis of riboflavin. In Bdellovibrio bacteriovorus (strain ATCC 15356 / DSM 50701 / NCIMB 9529 / HD100), this protein is 6,7-dimethyl-8-ribityllumazine synthase.